The primary structure comprises 703 residues: Cycloartenol synthase (703 aa).

2 PFTB repeats span residues 59–103 (IKKA…QLPE) and 106–148 (QREI…RLLG). Residue D435 is the Proton donor of the active site. PFTB repeat units follow at residues 461–503 (IADG…QNIM), 539–579 (IARG…VASG), 587–628 (IVKA…VNTG), and 645–686 (IERG…KNIF).

It belongs to the terpene cyclase/mutase family.

The enzyme catalyses (S)-2,3-epoxysqualene = cycloartenol. Functionally, converts oxidosqualene to cycloartenol (in vitro). The sequence is that of Cycloartenol synthase (cas1) from Dictyostelium discoideum (Social amoeba).